A 234-amino-acid chain; its full sequence is Leucyl/phenylalanyl-tRNA--protein transferase (234 aa).

The protein belongs to the L/F-transferase family.

The protein localises to the cytoplasm. The catalysed reaction is N-terminal L-lysyl-[protein] + L-leucyl-tRNA(Leu) = N-terminal L-leucyl-L-lysyl-[protein] + tRNA(Leu) + H(+). The enzyme catalyses N-terminal L-arginyl-[protein] + L-leucyl-tRNA(Leu) = N-terminal L-leucyl-L-arginyl-[protein] + tRNA(Leu) + H(+). It catalyses the reaction L-phenylalanyl-tRNA(Phe) + an N-terminal L-alpha-aminoacyl-[protein] = an N-terminal L-phenylalanyl-L-alpha-aminoacyl-[protein] + tRNA(Phe). Its function is as follows. Functions in the N-end rule pathway of protein degradation where it conjugates Leu, Phe and, less efficiently, Met from aminoacyl-tRNAs to the N-termini of proteins containing an N-terminal arginine or lysine. The protein is Leucyl/phenylalanyl-tRNA--protein transferase of Escherichia coli O157:H7 (strain EC4115 / EHEC).